The following is a 426-amino-acid chain: Glucose-6-phosphate isomerase (426 aa).

E276 acts as the Proton donor in catalysis. Active-site residues include H297 and K413.

This sequence belongs to the GPI family.

The protein localises to the cytoplasm. The catalysed reaction is alpha-D-glucose 6-phosphate = beta-D-fructose 6-phosphate. It functions in the pathway carbohydrate biosynthesis; gluconeogenesis. It participates in carbohydrate degradation; glycolysis; D-glyceraldehyde 3-phosphate and glycerone phosphate from D-glucose: step 2/4. Catalyzes the reversible isomerization of glucose-6-phosphate to fructose-6-phosphate. This is Glucose-6-phosphate isomerase from Mesoplasma florum (strain ATCC 33453 / NBRC 100688 / NCTC 11704 / L1) (Acholeplasma florum).